We begin with the raw amino-acid sequence, 236 residues long: Putative lipoprotein MlpA (236 aa).

The signal sequence occupies residues 1–21 (MTKNIVNTALVLVGAGSLLTG). Residue Cys22 is the site of N-palmitoyl cysteine attachment. The S-diacylglycerol cysteine moiety is linked to residue Cys22.

The protein resides in the cell membrane. In Myxococcus xanthus, this protein is Putative lipoprotein MlpA (mlpA).